Here is a 333-residue protein sequence, read N- to C-terminus: COMPASS-like H3K4 histone methylase component WDR5B (333 aa).

WD repeat units lie at residues 1-40 (MPSGGNGTSNGVANANSTGNAGTSGNVPIYKPYRHLKTLE), 41-80 (GHTAAISCVKFSNDGNLLASASVDKTMILWSATNYSLIHR), 83-122 (GHSSGISDLAWSSDSHYTCSASDDCTLRIWDARSPYECLK), 126-167 (GHTN…RMIK), 169-207 (HSMPISSVHFNRDGSLIVSASHDGSCKIWDAKEGTCLKT), 211-252 (DKSP…KVYT), 253-295 (GHTN…ILQR), and 298-333 (GHTDAVISVSCHPVQNEISSSGNHLDKTIRIWKQDA).

As to quaternary structure, unlike WDR5A, does not interact with RBL or TRO.

The protein is COMPASS-like H3K4 histone methylase component WDR5B of Arabidopsis thaliana (Mouse-ear cress).